Here is a 48-residue protein sequence, read N- to C-terminus: Small, acid-soluble spore protein P (48 aa).

The segment covering 1-12 (MTNKNDSKDMRK) has biased composition (basic and acidic residues). Positions 1–48 (MTNKNDSKDMRKNVSKGDNPGQPEPLDGSKKVKNRNHTRQKHNTSHDM) are disordered. Over residues 31–48 (KVKNRNHTRQKHNTSHDM) the composition is skewed to basic residues.

This sequence belongs to the SspP family.

It is found in the spore core. The sequence is that of Small, acid-soluble spore protein P from Geobacillus thermodenitrificans (strain NG80-2).